Here is a 47-residue protein sequence, read N- to C-terminus: MAFYRAFPGWTQVNSYRIRRSSRAERGVLAYSPAWSERPTPSRDTSV.

This is an uncharacterized protein from Escherichia coli.